A 606-amino-acid chain; its full sequence is Elongation factor 4 (606 aa).

One can recognise a tr-type G domain in the interval aspartate 11–lysine 193. Residues aspartate 23 to threonine 28 and asparagine 140 to aspartate 143 contribute to the GTP site.

It belongs to the TRAFAC class translation factor GTPase superfamily. Classic translation factor GTPase family. LepA subfamily.

It localises to the cell inner membrane. It catalyses the reaction GTP + H2O = GDP + phosphate + H(+). Functionally, required for accurate and efficient protein synthesis under certain stress conditions. May act as a fidelity factor of the translation reaction, by catalyzing a one-codon backward translocation of tRNAs on improperly translocated ribosomes. Back-translocation proceeds from a post-translocation (POST) complex to a pre-translocation (PRE) complex, thus giving elongation factor G a second chance to translocate the tRNAs correctly. Binds to ribosomes in a GTP-dependent manner. This is Elongation factor 4 from Caulobacter vibrioides (strain ATCC 19089 / CIP 103742 / CB 15) (Caulobacter crescentus).